The sequence spans 350 residues: tRNA uridine(34) hydroxylase (350 aa).

The region spanning 146–240 (DDPDALFIDM…YARKARDQGL (95 aa)) is the Rhodanese domain. The Cysteine persulfide intermediate role is filled by Cys-200.

Belongs to the TrhO family.

The catalysed reaction is uridine(34) in tRNA + AH2 + O2 = 5-hydroxyuridine(34) in tRNA + A + H2O. In terms of biological role, catalyzes oxygen-dependent 5-hydroxyuridine (ho5U) modification at position 34 in tRNAs, the first step in 5-carboxymethoxyuridine (cmo5U) biosynthesis. May be part of an alternate pathway, which is able to bypass cmo5U biogenesis in a subset of tRNAs under aerobic conditions. The chain is tRNA uridine(34) hydroxylase from Escherichia coli O6:K15:H31 (strain 536 / UPEC).